A 157-amino-acid chain; its full sequence is Crossover junction endodeoxyribonuclease RuvC (157 aa).

Active-site residues include Asp7, Glu66, and Asp139. Residues Asp7, Glu66, and Asp139 each contribute to the Mg(2+) site.

It belongs to the RuvC family. Homodimer which binds Holliday junction (HJ) DNA. The HJ becomes 2-fold symmetrical on binding to RuvC with unstacked arms; it has a different conformation from HJ DNA in complex with RuvA. In the full resolvosome a probable DNA-RuvA(4)-RuvB(12)-RuvC(2) complex forms which resolves the HJ. It depends on Mg(2+) as a cofactor.

The protein localises to the cytoplasm. The enzyme catalyses Endonucleolytic cleavage at a junction such as a reciprocal single-stranded crossover between two homologous DNA duplexes (Holliday junction).. Its function is as follows. The RuvA-RuvB-RuvC complex processes Holliday junction (HJ) DNA during genetic recombination and DNA repair. Endonuclease that resolves HJ intermediates. Cleaves cruciform DNA by making single-stranded nicks across the HJ at symmetrical positions within the homologous arms, yielding a 5'-phosphate and a 3'-hydroxyl group; requires a central core of homology in the junction. The consensus cleavage sequence is 5'-(A/T)TT(C/G)-3'. Cleavage occurs on the 3'-side of the TT dinucleotide at the point of strand exchange. HJ branch migration catalyzed by RuvA-RuvB allows RuvC to scan DNA until it finds its consensus sequence, where it cleaves and resolves the cruciform DNA. This Campylobacter concisus (strain 13826) protein is Crossover junction endodeoxyribonuclease RuvC.